The chain runs to 347 residues: Quinolinate synthase (347 aa).

Residues His-47 and Ser-68 each coordinate iminosuccinate. [4Fe-4S] cluster is bound at residue Cys-113. Residues Tyr-139–Asn-141 and Ser-156 contribute to the iminosuccinate site. Residue Cys-200 participates in [4Fe-4S] cluster binding. Residues His-226 to Glu-228 and Thr-243 each bind iminosuccinate. A [4Fe-4S] cluster-binding site is contributed by Cys-297.

It belongs to the quinolinate synthase family. Type 1 subfamily. [4Fe-4S] cluster is required as a cofactor.

The protein localises to the cytoplasm. It catalyses the reaction iminosuccinate + dihydroxyacetone phosphate = quinolinate + phosphate + 2 H2O + H(+). Its pathway is cofactor biosynthesis; NAD(+) biosynthesis; quinolinate from iminoaspartate: step 1/1. Functionally, catalyzes the condensation of iminoaspartate with dihydroxyacetone phosphate to form quinolinate. In Salmonella enteritidis PT4 (strain P125109), this protein is Quinolinate synthase.